Reading from the N-terminus, the 174-residue chain is Ribosome maturation factor RimM (174 aa).

The region spanning 97–169 is the PRC barrel domain; sequence PDTYYDHQLE…ILEIDPPDGL (73 aa).

It belongs to the RimM family. As to quaternary structure, binds ribosomal protein uS19.

The protein resides in the cytoplasm. Its function is as follows. An accessory protein needed during the final step in the assembly of 30S ribosomal subunit, possibly for assembly of the head region. Essential for efficient processing of 16S rRNA. May be needed both before and after RbfA during the maturation of 16S rRNA. It has affinity for free ribosomal 30S subunits but not for 70S ribosomes. This is Ribosome maturation factor RimM from Mycobacterium ulcerans (strain Agy99).